Reading from the N-terminus, the 101-residue chain is Putative fatty acid-binding protein 5-like protein 3 (101 aa).

Belongs to the calycin superfamily. Fatty-acid binding protein (FABP) family.

Its function is as follows. High specificity for fatty acids. The polypeptide is Putative fatty acid-binding protein 5-like protein 3 (FABP5P3) (Homo sapiens (Human)).